Reading from the N-terminus, the 518-residue chain is Calcium and calcium/calmodulin-dependent serine/threonine-protein kinase (518 aa).

Positions 13–300 (YEISEILGRG…AQELLSHPWV (288 aa)) constitute a Protein kinase domain. ATP contacts are provided by residues 19 to 27 (LGRGGFSVV) and K44. Residue D165 is the Proton acceptor of the active site. T265 is subject to Phosphothreonine. A calmodulin-binding region spans residues 323-336 (ARRKLRAAAIASVW). Positions 344–365 (TKKLRSLVGTYDLKEEEIESLR) form a coiled coil. EF-hand domains lie at 394–429 (SLIP…LKNS), 430–465 (KGDD…LPEE), and 472–507 (TEPG…DSSL). Residues D407, N409, D411, T413, E418, D443, D445, S447, C449, E454, D485, N487, D489, K491, and E496 each contribute to the Ca(2+) site.

This sequence belongs to the protein kinase superfamily. CAMK Ser/Thr protein kinase family. CaMK subfamily. In terms of assembly, interacts with IPD3. Interacts with CIP73. Autophosphorylation stimulated by calcium. Occurs probably by an intermolecular mechanism. As to expression, mainly expressed in roots and nodules. Detected in leaves, stems and cotyledons.

The protein localises to the nucleus. The enzyme catalyses L-seryl-[protein] + ATP = O-phospho-L-seryl-[protein] + ADP + H(+). The catalysed reaction is L-threonyl-[protein] + ATP = O-phospho-L-threonyl-[protein] + ADP + H(+). Activated by calcium/calmodulin binding after calcium-induced autophosphorylation. Functionally, calcium- and calmodulin-dependent protein kinase necessary and sufficient for dedifferentiation of root cortical cells into nodule initials. Not required for calcium spiking. Acts as central regulator of the nodule organogenesis program. Required for root hair curling and infection thread (IT) formation upon rhizobial infection, and arbuscule formation during arbuscular mycorrhiza (AM) fungal infection. Phosphorylates the downstream target IPD3, a protein required for root infection by symbiotic rhizobia and AM fungi. Phosphorylates the downstream target CIP73, a protein required for root nodule organogenesis. Mediates the phosphorylation of leghemoglobins (e.g. LB1) to modulate their oxygen O(2) affinity, thus regulating the diffusion of oxygen to the bacteroids in nodules. The protein is Calcium and calcium/calmodulin-dependent serine/threonine-protein kinase of Lotus japonicus (Lotus corniculatus var. japonicus).